Consider the following 185-residue polypeptide: Threonylcarbamoyl-AMP synthase (185 aa).

A YrdC-like domain is found at 5–185 (NWRVRLAARI…RDGRTGQRLR (181 aa)).

It belongs to the SUA5 family. TsaC subfamily.

The protein localises to the cytoplasm. The enzyme catalyses L-threonine + hydrogencarbonate + ATP = L-threonylcarbamoyladenylate + diphosphate + H2O. Functionally, required for the formation of a threonylcarbamoyl group on adenosine at position 37 (t(6)A37) in tRNAs that read codons beginning with adenine. Catalyzes the conversion of L-threonine, HCO(3)(-)/CO(2) and ATP to give threonylcarbamoyl-AMP (TC-AMP) as the acyladenylate intermediate, with the release of diphosphate. The polypeptide is Threonylcarbamoyl-AMP synthase (Nitrosococcus oceani (strain ATCC 19707 / BCRC 17464 / JCM 30415 / NCIMB 11848 / C-107)).